A 239-amino-acid polypeptide reads, in one-letter code: Small ribosomal subunit protein uS3 (239 aa).

Positions 39–107 (IRAALMKTLK…EVLINIVEVR (69 aa)) constitute a KH type-2 domain. The disordered stretch occupies residues 214–239 (AQDKKMAEQDHGGGGGDRRRRDRDAA).

Belongs to the universal ribosomal protein uS3 family. As to quaternary structure, part of the 30S ribosomal subunit. Forms a tight complex with proteins S10 and S14.

In terms of biological role, binds the lower part of the 30S subunit head. Binds mRNA in the 70S ribosome, positioning it for translation. In Methylocella silvestris (strain DSM 15510 / CIP 108128 / LMG 27833 / NCIMB 13906 / BL2), this protein is Small ribosomal subunit protein uS3.